Reading from the N-terminus, the 443-residue chain is Xaa-Pro dipeptidase (443 aa).

Residues aspartate 246, aspartate 257, histidine 339, glutamate 384, and glutamate 423 each contribute to the Mn(2+) site.

It belongs to the peptidase M24B family. Bacterial-type prolidase subfamily. It depends on Mn(2+) as a cofactor.

The enzyme catalyses Xaa-L-Pro dipeptide + H2O = an L-alpha-amino acid + L-proline. In terms of biological role, splits dipeptides with a prolyl residue in the C-terminal position. This chain is Xaa-Pro dipeptidase, found in Escherichia fergusonii (strain ATCC 35469 / DSM 13698 / CCUG 18766 / IAM 14443 / JCM 21226 / LMG 7866 / NBRC 102419 / NCTC 12128 / CDC 0568-73).